Consider the following 1129-residue polypeptide: Kinesin-like protein KIP1 (1129 aa).

A disordered region spans residues 1 to 49 (MLEQAEKLMKRNSSGAMSAPQSKPLARSRSSTMPTTTQKRVRSSQQSEG). 2 stretches are compositionally biased toward polar residues: residues 11 to 21 (RNSSGAMSAPQ) and 28 to 48 (SRSS…QQSE). The 364-residue stretch at 54–417 (NIKVYVRCRS…LEYATRAKSI (364 aa)) folds into the Kinesin motor domain. 139–146 (GQTGTGKT) serves as a coordination point for ATP. 3 coiled-coil regions span residues 422–513 (QVNQ…ELDV), 681–765 (LEKE…QKIV), and 919–948 (DDQR…TLVN).

This sequence belongs to the TRAFAC class myosin-kinesin ATPase superfamily. Kinesin family. BimC subfamily.

The protein localises to the cytoplasm. It is found in the cytoskeleton. It localises to the spindle. Functionally, required for assembly of the mitotic spindle. Interacts with spindle microtubules to produce an outwardly directed force acting upon the poles. Following spindle assembly, CIN8 and KIP1 apparently act to oppose a force that draws separated poles back together. This force seems to be mediate by KAR3. This is Kinesin-like protein KIP1 (KIP1) from Eremothecium gossypii (strain ATCC 10895 / CBS 109.51 / FGSC 9923 / NRRL Y-1056) (Yeast).